Reading from the N-terminus, the 276-residue chain is NADPH-dependent 7-cyano-7-deazaguanine reductase (276 aa).

Residue 80–82 participates in substrate binding; that stretch reads IES. 82–83 provides a ligand contact to NADPH; the sequence is SK. Cysteine 178 acts as the Thioimide intermediate in catalysis. Aspartate 185 serves as the catalytic Proton donor. 217–218 serves as a coordination point for substrate; sequence HE. NADPH is bound at residue 246–247; that stretch reads RG.

Belongs to the GTP cyclohydrolase I family. QueF type 2 subfamily. Homodimer.

It localises to the cytoplasm. The catalysed reaction is 7-aminomethyl-7-carbaguanine + 2 NADP(+) = 7-cyano-7-deazaguanine + 2 NADPH + 3 H(+). The protein operates within tRNA modification; tRNA-queuosine biosynthesis. Its function is as follows. Catalyzes the NADPH-dependent reduction of 7-cyano-7-deazaguanine (preQ0) to 7-aminomethyl-7-deazaguanine (preQ1). In Teredinibacter turnerae (strain ATCC 39867 / T7901), this protein is NADPH-dependent 7-cyano-7-deazaguanine reductase.